Consider the following 954-residue polypeptide: Valine--tRNA ligase (954 aa).

A 'HIGH' region motif is present at residues 48-58 (PNVTGSLHMGH). Positions 560–564 (KMSKS) match the 'KMSKS' region motif. An ATP-binding site is contributed by Lys563. Positions 883 to 953 (AGFINKEAEL…IQEQYKAIEA (71 aa)) form a coiled coil.

The protein belongs to the class-I aminoacyl-tRNA synthetase family. ValS type 1 subfamily. Monomer.

The protein resides in the cytoplasm. The enzyme catalyses tRNA(Val) + L-valine + ATP = L-valyl-tRNA(Val) + AMP + diphosphate. Functionally, catalyzes the attachment of valine to tRNA(Val). As ValRS can inadvertently accommodate and process structurally similar amino acids such as threonine, to avoid such errors, it has a 'posttransfer' editing activity that hydrolyzes mischarged Thr-tRNA(Val) in a tRNA-dependent manner. The protein is Valine--tRNA ligase of Haemophilus influenzae (strain 86-028NP).